We begin with the raw amino-acid sequence, 345 residues long: Beta-2-glycoprotein 1 (345 aa).

The first 19 residues, 1–19 (MISPVLILFSSFLCHVAIA), serve as a signal peptide directing secretion. Sushi domains are found at residues 21–81 (RTCP…KCTP), 82–139 (RVCP…VCAP), 140–202 (IICP…ECRE), and 203–262 (VKCP…SCKA). Cystine bridges form between Cys-23–Cys-66, Cys-51–Cys-79, Cys-84–Cys-124, Cys-110–Cys-137, Cys-142–Cys-188, Cys-174–Cys-200, Cys-205–Cys-248, Cys-234–Cys-260, Cys-264–Cys-315, Cys-300–Cys-325, and Cys-307–Cys-345. Thr-33 carries O-linked (GalNAc...) threonine glycosylation. O-linked (GalNAc...) threonine glycosylation is present at Thr-149. N-linked (GlcNAc...) (complex) asparagine glycosylation occurs at Asn-162. Asn-183 and Asn-193 each carry an N-linked (GlcNAc...) asparagine glycan. Asn-253 carries N-linked (GlcNAc...) asparagine glycosylation. The interval 263-345 (SCKVPVKKAT…KTDASDVKPC (83 aa)) is sushi-like.

In terms of processing, N- and O-glycosylated. PubMed:6587378 also reports glycosylation on 'Asn-188' for their allele. In terms of tissue distribution, expressed by the liver and secreted in plasma.

Its subcellular location is the secreted. In terms of biological role, binds to various kinds of negatively charged substances such as heparin, phospholipids, and dextran sulfate. May prevent activation of the intrinsic blood coagulation cascade by binding to phospholipids on the surface of damaged cells. This is Beta-2-glycoprotein 1 (APOH) from Homo sapiens (Human).